The following is a 137-amino-acid chain: Basic phospholipase A2 3 (137 aa).

The signal sequence occupies residues 1-11 (LVAVCVSLLGA). Positions 12 to 19 (ANIPPQPL) are excised as a propeptide. 7 cysteine pairs are disulfide-bonded: Cys30-Cys89, Cys44-Cys136, Cys46-Cys62, Cys61-Cys117, Cys68-Cys110, Cys78-Cys103, and Cys96-Cys108. The Ca(2+) site is built by Tyr45, Gly47, and Gly49. The active site involves His65. Asp66 contributes to the Ca(2+) binding site. Asp111 is an active-site residue.

It belongs to the phospholipase A2 family. Group I subfamily. D49 sub-subfamily. As to quaternary structure, monomer, or homotrimer. Was firstly described as a trimer, but has been reinterpreted with the possibility of being a monomer. Ca(2+) is required as a cofactor. Expressed by the venom gland.

The protein localises to the secreted. The catalysed reaction is a 1,2-diacyl-sn-glycero-3-phosphocholine + H2O = a 1-acyl-sn-glycero-3-phosphocholine + a fatty acid + H(+). Snake venom phospholipase A2 (PLA2) that shows anticoagulant and neurotoxic activities. PLA2 catalyzes the calcium-dependent hydrolysis of the 2-acyl groups in 3-sn-phosphoglycerides. The protein is Basic phospholipase A2 3 of Bungarus caeruleus (Indian krait).